Consider the following 251-residue polypeptide: 5-oxoprolinase subunit A 2 (251 aa).

The protein belongs to the LamB/PxpA family. Forms a complex composed of PxpA, PxpB and PxpC.

It carries out the reaction 5-oxo-L-proline + ATP + 2 H2O = L-glutamate + ADP + phosphate + H(+). Catalyzes the cleavage of 5-oxoproline to form L-glutamate coupled to the hydrolysis of ATP to ADP and inorganic phosphate. The protein is 5-oxoprolinase subunit A 2 of Pseudomonas syringae pv. tomato (strain ATCC BAA-871 / DC3000).